The sequence spans 572 residues: AAA ATPase forming ring-shaped complexes (572 aa).

The interval 1-22 (MTEPRHESGSAAPQRPATDPVQ) is disordered. A coiled-coil region spans residues 21-67 (VQRQVNLLRDQKRNLDKQAAALASQNEKLVRLLNASRQEIVGLKKTL). Residue 270-275 (GNGKTL) participates in ATP binding. Positions 527 to 539 (HEQQDLPDTEDSE) are enriched in acidic residues. The tract at residues 527–572 (HEQQDLPDTEDSEDWARLTGRRGDTIDSVHMASHRPQGEPGPGATP) is disordered.

The protein belongs to the AAA ATPase family. Homohexamer. Assembles into a hexameric ring structure.

The chain is AAA ATPase forming ring-shaped complexes from Kocuria rhizophila (strain ATCC 9341 / DSM 348 / NBRC 103217 / DC2201).